A 1031-amino-acid polypeptide reads, in one-letter code: Putative protein TIC 214 N-terminal part (1031 aa).

6 consecutive transmembrane segments (helical) span residues I11–L31, T68–L88, A92–S112, G127–P147, S166–L186, and T212–F232.

The protein belongs to the TIC214 family. In terms of assembly, part of the Tic complex.

It is found in the plastid. The protein localises to the chloroplast inner membrane. Functionally, involved in protein precursor import into chloroplasts. May be part of an intermediate translocation complex acting as a protein-conducting channel at the inner envelope. This is Putative protein TIC 214 N-terminal part from Anthoceros angustus (Hornwort).